The following is a 42-amino-acid chain: Thymosin beta-10 (42 aa).

Basic and acidic residues-rich tracts occupy residues Met-1 to Glu-25 and Glu-33 to Lys-42. Residues Met-1–Lys-42 form a disordered region. Residue Ala-2 is modified to N-acetylalanine. Lys-4 carries the N6-acetyllysine modification. Residue Ser-12 is modified to Phosphoserine. At Lys-15 the chain carries N6-acetyllysine. Phosphothreonine is present on residues Thr-21, Thr-23, and Thr-34. An N6-acetyllysine modification is found at Lys-39.

This sequence belongs to the thymosin beta family. As to expression, distributed in numerous types of tissues, including thymus, spleen, lung, liver and muscle.

Its subcellular location is the cytoplasm. It localises to the cytoskeleton. Plays an important role in the organization of the cytoskeleton. Binds to and sequesters actin monomers (G actin) and therefore inhibits actin polymerization. In Bos taurus (Bovine), this protein is Thymosin beta-10 (TMSB10).